Consider the following 898-residue polypeptide: Aconitate hydratase 1 (898 aa).

The residue at position 2 (A2) is an N-acetylalanine. Substrate-binding positions include Q90 and 209-211 (DSH). Residues C441, C507, and C510 each contribute to the [4Fe-4S] cluster site. Substrate is bound by residues R540, R545, R703, and 784–785 (SR).

It belongs to the aconitase/IPM isomerase family. As to quaternary structure, monomer. The cofactor is [4Fe-4S] cluster. In terms of tissue distribution, mostly expressed in roots, stems and leaves, also present in stems and flowers.

The protein resides in the cytoplasm. The protein localises to the mitochondrion. It carries out the reaction citrate = D-threo-isocitrate. Its pathway is carbohydrate metabolism; tricarboxylic acid cycle; isocitrate from oxaloacetate: step 2/2. Catalyzes the isomerization of citrate to isocitrate via cis-aconitate. Contributes to oxidative stress tolerance. May have a role in respiration. The polypeptide is Aconitate hydratase 1 (Arabidopsis thaliana (Mouse-ear cress)).